Consider the following 427-residue polypeptide: Glutamate-1-semialdehyde 2,1-aminomutase (427 aa).

K265 is subject to N6-(pyridoxal phosphate)lysine.

The protein belongs to the class-III pyridoxal-phosphate-dependent aminotransferase family. HemL subfamily. In terms of assembly, homodimer. Requires pyridoxal 5'-phosphate as cofactor.

It is found in the cytoplasm. The catalysed reaction is (S)-4-amino-5-oxopentanoate = 5-aminolevulinate. It functions in the pathway porphyrin-containing compound metabolism; protoporphyrin-IX biosynthesis; 5-aminolevulinate from L-glutamyl-tRNA(Glu): step 2/2. This Nitratiruptor sp. (strain SB155-2) protein is Glutamate-1-semialdehyde 2,1-aminomutase.